Reading from the N-terminus, the 570-residue chain is Protein misato homolog 1 (570 aa).

The residue at position 495 (serine 495) is a Phosphoserine.

This sequence belongs to the misato family. As to expression, present in all cell lines tested (at protein level). Widely expressed.

It is found in the mitochondrion outer membrane. The protein resides in the cytoplasm. Involved in the regulation of mitochondrial distribution and morphology. Required for mitochondrial fusion and mitochondrial network formation. The polypeptide is Protein misato homolog 1 (MSTO1) (Homo sapiens (Human)).